A 429-amino-acid chain; its full sequence is Glutamate-1-semialdehyde 2,1-aminomutase 2 (429 aa).

At lysine 268 the chain carries N6-(pyridoxal phosphate)lysine.

The protein belongs to the class-III pyridoxal-phosphate-dependent aminotransferase family. HemL subfamily. Homodimer. Pyridoxal 5'-phosphate serves as cofactor.

The protein localises to the cytoplasm. It carries out the reaction (S)-4-amino-5-oxopentanoate = 5-aminolevulinate. The protein operates within porphyrin-containing compound metabolism; protoporphyrin-IX biosynthesis; 5-aminolevulinate from L-glutamyl-tRNA(Glu): step 2/2. The polypeptide is Glutamate-1-semialdehyde 2,1-aminomutase 2 (Bacillus velezensis (strain DSM 23117 / BGSC 10A6 / LMG 26770 / FZB42) (Bacillus amyloliquefaciens subsp. plantarum)).